A 415-amino-acid polypeptide reads, in one-letter code: 1-deoxy-D-xylulose 5-phosphate reductoisomerase (415 aa).

T10, G11, S12, I13, G36, R37, N38, and N128 together coordinate NADPH. Position 129 (K129) interacts with 1-deoxy-D-xylulose 5-phosphate. Residue E130 participates in NADPH binding. D154 lines the Mn(2+) pocket. Residues S155, E156, S192, and H215 each contribute to the 1-deoxy-D-xylulose 5-phosphate site. Mn(2+) is bound at residue E156. Residue G221 coordinates NADPH. The 1-deoxy-D-xylulose 5-phosphate site is built by S228, N233, K234, and E237. E237 contacts Mn(2+).

The protein belongs to the DXR family. Mg(2+) is required as a cofactor. The cofactor is Mn(2+).

It carries out the reaction 2-C-methyl-D-erythritol 4-phosphate + NADP(+) = 1-deoxy-D-xylulose 5-phosphate + NADPH + H(+). It participates in isoprenoid biosynthesis; isopentenyl diphosphate biosynthesis via DXP pathway; isopentenyl diphosphate from 1-deoxy-D-xylulose 5-phosphate: step 1/6. In terms of biological role, catalyzes the NADPH-dependent rearrangement and reduction of 1-deoxy-D-xylulose-5-phosphate (DXP) to 2-C-methyl-D-erythritol 4-phosphate (MEP). This chain is 1-deoxy-D-xylulose 5-phosphate reductoisomerase, found in Synechococcus sp. (strain CC9605).